Here is an 80-residue protein sequence, read N- to C-terminus: RNA-binding protein Hfq (80 aa).

The Sm domain maps to 10 to 69 (DPFLNTLRREHVPVSIYLVNGIKLQGQIESFDQYVVLLKNTVTQMVYKHAISTVVPARPV).

The protein belongs to the Hfq family. As to quaternary structure, homohexamer.

Its function is as follows. RNA chaperone that binds small regulatory RNA (sRNAs) and mRNAs to facilitate mRNA translational regulation in response to envelope stress, environmental stress and changes in metabolite concentrations. Also binds with high specificity to tRNAs. This chain is RNA-binding protein Hfq, found in Azoarcus sp. (strain BH72).